The following is a 601-amino-acid chain: Coronin-like protein crn1 (601 aa).

WD repeat units follow at residues 79–119 (GHTA…TVME), 132–172 (GHSR…AHVS), 174–213 (KMDV…PVSV), 220–260 (AKNP…EPIG), and 266–306 (DTGS…FHYL). Disordered stretches follow at residues 361-386 (SDIY…KDAQ) and 407-540 (SATV…VEEK). 3 stretches are compositionally biased toward basic and acidic residues: residues 419-429 (KHNEEKVETPK), 437-453 (KPKE…EPEV), and 462-495 (KVEE…EKSF). A phosphoserine mark is found at S500 and S501. Residues 507-526 (EDVKKEPSEEKKLEVSDEAP) are compositionally biased toward basic and acidic residues. The residue at position 553 (S553) is a Phosphoserine. Positions 556-600 (NLADLNKRFEGFEKRYEEELAIRDWKIAQLEDKLAKLTEAIKEKC) form a coiled coil.

The protein belongs to the WD repeat coronin family. In terms of assembly, binds to F-actin.

The polypeptide is Coronin-like protein crn1 (crn1) (Schizosaccharomyces pombe (strain 972 / ATCC 24843) (Fission yeast)).